A 646-amino-acid chain; its full sequence is Chaperone protein DnaK (646 aa).

A Phosphothreonine; by autocatalysis modification is found at threonine 198. The segment at 603 to 646 (EQAQQAGGAEGFDPNAFQGGDAGQQKADDGVVDAEFTEVKDDKK) is disordered. The span at 618–627 (AFQGGDAGQQ) shows a compositional bias: low complexity.

This sequence belongs to the heat shock protein 70 family.

In terms of biological role, acts as a chaperone. In Acinetobacter baumannii (strain AB307-0294), this protein is Chaperone protein DnaK.